The following is a 424-amino-acid chain: Putative chloroquine resistance transporter (424 aa).

The Cytoplasmic segment spans residues 1–56 (MTVIKKGKNKKKNLKNDDRYKELDSLITNGSEIGDNSGRSCIKRFFKIIGNEMKNN). A helical membrane pass occupies residues 57–77 (VYVYFLSILYLCVCVMNKVFA). The Vacuolar segment spans residues 78–88 (KRTLNKMGNYS). A glycan (N-linked (GlcNAc...) asparagine) is linked at Asn86. A helical transmembrane segment spans residues 89 to 109 (FVTSETHNIICIVVFQLLYFI). At 110 to 125 (YRKTSTSGYKNESQKN) the chain is on the cytoplasmic side. A helical transmembrane segment spans residues 126 to 146 (FGWQFFLISLLDASTVIISMI). Topologically, residues 147–156 (GLTRTTGNIQ) are vacuolar. Residues 157–177 (SFIMQLIIPVNMYFCFMFLGY) form a helical membrane-spanning segment. At 178 to 180 (RYH) the chain is on the cytoplasmic side. A helical membrane pass occupies residues 181–201 (LFNYLGAFIILITIAVVETFL). Residues 202–209 (SFETQSEN) lie on the Vacuolar side of the membrane. A helical transmembrane segment spans residues 210-230 (SIIFNLIMISALIPLSFSNMT). At 231 to 248 (REVVFKKHKINILRLNAM) the chain is on the cytoplasmic side. Residues 249–269 (VVLFQFFTSLLVLPVYNIPFL) traverse the membrane as a helical segment. Over 270-317 (KEIYMPFSEMSTNINNGLRCLFYGQNTVVENCGVGMVKMCDNCEGAWK) the chain is Vacuolar. 2 cysteine pairs are disulfide-bonded: Cys289–Cys312 and Cys301–Cys309. The chain crosses the membrane as a helical span at residues 318-338 (TFITFSFFNICDNLLACYIID). The Cytoplasmic portion of the chain corresponds to 339–346 (KFSTMTYT). Residues 347 to 367 (IVSCIQGPAITIAYYFKFLAG) traverse the membrane as a helical segment. Over 368 to 377 (DAVRKPRILD) the chain is Vacuolar. A helical transmembrane segment spans residues 378–398 (FLTLFGYLFGTIIYRIGNIIL). The Cytoplasmic portion of the chain corresponds to 399–424 (EKKKMVKSQNSNDSEAELTCIETSTA).

The protein belongs to the CRT-like transporter family.

Its subcellular location is the vacuole membrane. In terms of biological role, nutrient transporter. Involved in maintaining the osmotic homeostasis of the digestive vacuole. This chain is Putative chloroquine resistance transporter, found in Plasmodium yoelii yoelii.